We begin with the raw amino-acid sequence, 285 residues long: uncharacterized protein (285 aa).

Residues 92–199 (TLLLADVEES…PTINRTARLR (108 aa)) enclose the Guanylate cyclase domain.

The protein belongs to the adenylyl cyclase class-4/guanylyl cyclase family.

This is an uncharacterized protein from Mycobacterium tuberculosis (strain ATCC 25618 / H37Rv).